Here is a 202-residue protein sequence, read N- to C-terminus: GTP cyclohydrolase 1 (202 aa).

Residues C90, H93, and C163 each contribute to the Zn(2+) site.

This sequence belongs to the GTP cyclohydrolase I family. In terms of assembly, toroid-shaped homodecamer, composed of two pentamers of five dimers.

It carries out the reaction GTP + H2O = 7,8-dihydroneopterin 3'-triphosphate + formate + H(+). Its pathway is cofactor biosynthesis; 7,8-dihydroneopterin triphosphate biosynthesis; 7,8-dihydroneopterin triphosphate from GTP: step 1/1. This is GTP cyclohydrolase 1 (folE) from Mycobacterium bovis (strain ATCC BAA-935 / AF2122/97).